The sequence spans 332 residues: RING-H2 finger protein ATL81 (332 aa).

The signal sequence occupies residues 1 to 19 (MYDLTFLLISLFPIDITLP). A helical membrane pass occupies residues 76–96 (IVLTGSLLFIIFTGFFSFFFC). The segment at 154–196 (CSICLTEFMDDDTIRLISTCNHSFHTICIDLWFEGHKTCPVCR) adopts an RING-type; atypical zinc-finger fold.

It belongs to the RING-type zinc finger family. ATL subfamily.

The protein localises to the membrane. It catalyses the reaction S-ubiquitinyl-[E2 ubiquitin-conjugating enzyme]-L-cysteine + [acceptor protein]-L-lysine = [E2 ubiquitin-conjugating enzyme]-L-cysteine + N(6)-ubiquitinyl-[acceptor protein]-L-lysine.. The protein operates within protein modification; protein ubiquitination. The polypeptide is RING-H2 finger protein ATL81 (ATL81) (Arabidopsis thaliana (Mouse-ear cress)).